The sequence spans 191 residues: Pyridoxal 5'-phosphate synthase subunit PdxT (191 aa).

L-glutamine is bound at residue 46–48; the sequence is GES. The active-site Nucleophile is cysteine 78. Residues arginine 105 and 133-134 each bind L-glutamine; that span reads IR. Active-site charge relay system residues include histidine 169 and glutamate 171.

This sequence belongs to the glutaminase PdxT/SNO family. As to quaternary structure, in the presence of PdxS, forms a dodecamer of heterodimers. Only shows activity in the heterodimer.

It catalyses the reaction aldehydo-D-ribose 5-phosphate + D-glyceraldehyde 3-phosphate + L-glutamine = pyridoxal 5'-phosphate + L-glutamate + phosphate + 3 H2O + H(+). It carries out the reaction L-glutamine + H2O = L-glutamate + NH4(+). It participates in cofactor biosynthesis; pyridoxal 5'-phosphate biosynthesis. In terms of biological role, catalyzes the hydrolysis of glutamine to glutamate and ammonia as part of the biosynthesis of pyridoxal 5'-phosphate. The resulting ammonia molecule is channeled to the active site of PdxS. In Fervidobacterium nodosum (strain ATCC 35602 / DSM 5306 / Rt17-B1), this protein is Pyridoxal 5'-phosphate synthase subunit PdxT.